A 534-amino-acid chain; its full sequence is GMP synthase [glutamine-hydrolyzing] (534 aa).

Residues 20-210 (PVLVIDFGAQ…LLVGAGCRPS (191 aa)) form the Glutamine amidotransferase type-1 domain. The active-site Nucleophile is the cysteine 97. Catalysis depends on residues histidine 184 and glutamate 186. Residues 211 to 408 (WTMINIVEEA…LGLPEDIVWR (198 aa)) form the GMPS ATP-PPase domain. 238-244 (SGGVDSA) is a binding site for ATP.

As to quaternary structure, homodimer.

The enzyme catalyses XMP + L-glutamine + ATP + H2O = GMP + L-glutamate + AMP + diphosphate + 2 H(+). It participates in purine metabolism; GMP biosynthesis; GMP from XMP (L-Gln route): step 1/1. Its function is as follows. Catalyzes the synthesis of GMP from XMP. This Parafrankia sp. (strain EAN1pec) protein is GMP synthase [glutamine-hydrolyzing].